A 438-amino-acid polypeptide reads, in one-letter code: MTLTDLETCAEEIATAARTLARDGHSGGYSAGLPDHLRPVQRTLIANASQVLALASQPADLVRQLALYNQLLACLRWLGEFQVLACIPLDESVPFEDVADIAGVPECRLRRLVRPLFTIGFLCEPSPGHVAHSVMSKQFVTQPALLDAILFMSETLAPSASAMGTQTRRFGASEQAEDSAWNMAVGSDSPFAECLQQRPKVKRQLGAYLSYVSSSIDAGVEDTLTRMNWQNLGMATVVHVGAQSPSLVVALAPQFPSLRFLVQTEAKAESGGHQPCLDNHGISALKLASIPLHLRARITWGTRLSTATQPVLDAAVYLISIPFPSPQSPAMEITMRVAQALKAHVEVLRNNSDARLILTLPMSSATRSMDAAARAAVSLSDLSLLQLTNGGSLNMGEIRDLLRSRSDGLVVMREVRSPTNAVIAFEIQYRVDNDDNRY.

An HTH iclR-type domain is found at L65–V134. Residues F95 to R114 constitute a DNA-binding region (H-T-H motif).

As to quaternary structure, interacts with aflR.

Its subcellular location is the nucleus. Its function is as follows. Transcription factor; part of the gene cluster that mediates the biosynthesis of aflatoxin, a polyketide-derived furanocoumarin which is part of the most toxic and carcinogenic compounds among the known mycotoxins. AflS exhibits no DNA-binding capability on its own, but forms a complex with the other aflatoxin cluster transcription factor aflR and acts as a modulator of aflR's DNA-binding by decreasing its DNA-binding affinity. The protein is Aflatoxin cluster transcriptional coactivator aflS of Aspergillus flavus (strain ATCC 200026 / FGSC A1120 / IAM 13836 / NRRL 3357 / JCM 12722 / SRRC 167).